A 284-amino-acid chain; its full sequence is Bifunctional protein FolD (284 aa).

166-168 serves as a coordination point for NADP(+); it reads GAS.

This sequence belongs to the tetrahydrofolate dehydrogenase/cyclohydrolase family. In terms of assembly, homodimer.

It carries out the reaction (6R)-5,10-methylene-5,6,7,8-tetrahydrofolate + NADP(+) = (6R)-5,10-methenyltetrahydrofolate + NADPH. The catalysed reaction is (6R)-5,10-methenyltetrahydrofolate + H2O = (6R)-10-formyltetrahydrofolate + H(+). The protein operates within one-carbon metabolism; tetrahydrofolate interconversion. In terms of biological role, catalyzes the oxidation of 5,10-methylenetetrahydrofolate to 5,10-methenyltetrahydrofolate and then the hydrolysis of 5,10-methenyltetrahydrofolate to 10-formyltetrahydrofolate. The chain is Bifunctional protein FolD from Legionella pneumophila (strain Corby).